The sequence spans 589 residues: PTS system mannitol-specific EIICB component (589 aa).

Residues 1-25 (MEEKVSLKVRVQKLGTSLSNMVMPN) lie on the Cytoplasmic side of the membrane. Positions 14 to 347 (LGTSLSNMVM…LHADKSTEDS (334 aa)) constitute a PTS EIIC type-2 domain. Residues 26 to 47 (IGAFIAWGVLTALFIADGYLPN) traverse the membrane as a helical segment. Over 48–51 (EQLA) the chain is Extracellular. A helical membrane pass occupies residues 52-72 (TVVGPMLTYLLPILIGYTGGY). Residues 73 to 135 (MIHGQRGAVV…PGFEMLVNNF (63 aa)) are Cytoplasmic-facing. Residues 136-157 (SAGLVGFALLLLAFYAIGPVVS) traverse the membrane as a helical segment. Residues 158–166 (TLTGAVGNG) lie on the Extracellular side of the membrane. The helical transmembrane segment at 167 to 187 (VEAIVNARLLPMANIIIEPAK) threads the bilayer. Over 188–274 (VLFLNNALNH…VMMKPTLFLA (87 aa)) the chain is Cytoplasmic. A helical transmembrane segment spans residues 275–294 (AMAGGISGTFTFQLLDAGLK). At 295–316 (SPASPGSIIAIIATAPKGVWPH) the chain is on the extracellular side. The chain crosses the membrane as a helical span at residues 317-338 (LNVLLGVLVAAVVSFLVAALIL). Topologically, residues 339–589 (HADKSTEDSL…YDKMAARMYK (251 aa)) are cytoplasmic. A PTS EIIB type-2 domain is found at 381 to 476 (EKIIFACDAG…SLTGASPIAE (96 aa)). Residue Cys387 is the Phosphocysteine intermediate; for EIIB activity of the active site. Cys387 carries the post-translational modification Phosphocysteine; by EIIA.

Homodimer.

It is found in the cell membrane. The enzyme catalyses D-mannitol(out) + N(pros)-phospho-L-histidyl-[protein] = D-mannitol 1-phosphate(in) + L-histidyl-[protein]. In terms of biological role, the phosphoenolpyruvate-dependent sugar phosphotransferase system (sugar PTS), a major carbohydrate active transport system, catalyzes the phosphorylation of incoming sugar substrates concomitantly with their translocation across the cell membrane. The enzyme II CmtAB PTS system is involved in D-mannitol transport. The chain is PTS system mannitol-specific EIICB component (mtlA) from Streptococcus pneumoniae serotype 4 (strain ATCC BAA-334 / TIGR4).